The following is a 185-amino-acid chain: Large ribosomal subunit protein uL5 (185 aa).

It belongs to the universal ribosomal protein uL5 family. Part of the 50S ribosomal subunit; part of the 5S rRNA/L5/L18/L25 subcomplex. Contacts the 5S rRNA and the P site tRNA. Forms a bridge to the 30S subunit in the 70S ribosome.

Its function is as follows. This is one of the proteins that bind and probably mediate the attachment of the 5S RNA into the large ribosomal subunit, where it forms part of the central protuberance. In the 70S ribosome it contacts protein S13 of the 30S subunit (bridge B1b), connecting the 2 subunits; this bridge is implicated in subunit movement. Contacts the P site tRNA; the 5S rRNA and some of its associated proteins might help stabilize positioning of ribosome-bound tRNAs. The chain is Large ribosomal subunit protein uL5 from Streptomyces avermitilis (strain ATCC 31267 / DSM 46492 / JCM 5070 / NBRC 14893 / NCIMB 12804 / NRRL 8165 / MA-4680).